A 324-amino-acid chain; its full sequence is Acetaldehyde dehydrogenase 1 (324 aa).

Position 18–21 (18–21 (SGNI)) interacts with NAD(+). Cys136 (acyl-thioester intermediate) is an active-site residue. NAD(+)-binding positions include 167–175 (SAGPGTRAN) and Asn297.

This sequence belongs to the acetaldehyde dehydrogenase family.

It carries out the reaction acetaldehyde + NAD(+) + CoA = acetyl-CoA + NADH + H(+). The chain is Acetaldehyde dehydrogenase 1 from Parafrankia sp. (strain EAN1pec).